The primary structure comprises 601 residues: MFGFVSDLLTAAVSSLDELLQDTPAHQIILGTAALYFLYNQYHNPSISRWYRSRNNASMKQRIIDSAYALAKNLPGVNQIIEKELNKELSSTREKLRIQRSGMTLREEIPEEGLSPQDILSAFDVDVEKCHFDFLSVTNDSPEREFLVERGDGKDSGALYAIHPKELTELLKEVYGATALTNPLHDKWPRINAMQAEVIRWCQNLFHGSKECYGLLTHGGTTSIIEAMAAYVIRARAKGIDYPEIVVPETAHAAFKKAAELTGAILITVPVDKKTGAVNPKVMSSYITRNTAVIVGSAPSFMNGIHDPVSELGQLAKKKNVPFHVDACLGGFLTAFLDTSSEPMDFRVPGVTSISADLHKYGCCPKGTSVCLFSEDSPALSVYAALNWSGGLYATPGILDGSTSGARVAEVYATLSYYGKNKYQEIAKSIITLRNAIQKELTTLLEEGNGLTSEDIYVYGNPQWSILGFRSNTCNAHFIADELEKRGWKLNLLQNPDGFHLCLTHVHTLVKGFETQFIKDLREAVIDVKNYPPGKKPSGNVKVYGAVGMMPIELQREICKQYQKARLNYTSASPGSLRIFTNVPVEEDEGLRNRKTEKYKV.

Lys360 bears the N6-(pyridoxal phosphate)lysine mark.

Belongs to the group II decarboxylase family. Sphingosine-1-phosphate lyase subfamily. Pyridoxal 5'-phosphate is required as a cofactor.

The enzyme catalyses sphinganine 1-phosphate = hexadecanal + phosphoethanolamine. In terms of biological role, cleaves phosphorylated sphingoid bases (PSBs), such as sphingosine-1-phosphate, into fatty aldehydes and phosphoethanolamine. Possibly implicated in influencing the macrophage autophagy pathway. The protein is Probable sphingosine-1-phosphate lyase of Legionella pneumophila subsp. pneumophila (strain Philadelphia 1 / ATCC 33152 / DSM 7513).